The following is a 510-amino-acid chain: Sucrose transport protein SUC4 (510 aa).

The segment at 1-34 (MATSDQDRRHRVTRNRPPIARPSTSSSRPVVSPP) is disordered. Topologically, residues 1–45 (MATSDQDRRHRVTRNRPPIARPSTSSSRPVVSPPRSKVSKRVLLR) are cytoplasmic. Residues 21–34 (RPSTSSSRPVVSPP) show a composition bias toward low complexity. Position 23 is a phosphoserine (serine 23). A helical membrane pass occupies residues 46 to 66 (VASVACGIQFGWALQLSLLTP). The Extracellular portion of the chain corresponds to 67-71 (YVQEL). A helical membrane pass occupies residues 72–92 (GIPHAWASVIWLCGPLSGLFV). Over 93–111 (QPLVGHSSDRCTSKYGRRR) the chain is Cytoplasmic. Residues 112 to 132 (PFIVAGAVAISISVMVIGHAA) form a helical membrane-spanning segment. At 133–148 (DIGWAFGDREGKIKPR) the chain is on the extracellular side. The helical transmembrane segment at 149–169 (AIVAFVLGFWILDVANNMTQG) threads the bilayer. The Cytoplasmic portion of the chain corresponds to 170 to 187 (PCRALLADLTENDNRRTR). A helical membrane pass occupies residues 188 to 208 (VANGYFSLFMAVGNVLGYATG). Residues 209-233 (SYNGWYKIFTFTKTVACNVECANLK) are Extracellular-facing. The helical transmembrane segment at 234 to 254 (SAFYIDVVFIAITTILSVSAA) threads the bilayer. Over 255-291 (HEVPLASLASEAHGQTSGTDEAFLSEIFGTFRYFPGN) the chain is Cytoplasmic. A helical transmembrane segment spans residues 292–312 (VWIILLVTALTWIGWFPFILF). The Extracellular portion of the chain corresponds to 313-335 (DTDWMGREIYGGEPNIGTSYSAG). The chain crosses the membrane as a helical span at residues 336–356 (VSMGALGLMLNSVFLGITSVL). The Cytoplasmic segment spans residues 357–365 (MEKLCRKWG). A helical transmembrane segment spans residues 366 to 386 (AGFVWGISNILMAICFLGMII). The Extracellular segment spans residues 387-402 (TSFVASHLGYIGHEQP). A helical transmembrane segment spans residues 403-423 (PASIVFAAVLIFTILGIPLAI). Topologically, residues 424–443 (TYSVPYALISIRIESLGLGQ) are cytoplasmic. The helical transmembrane segment at 444–464 (GLSLGVLNLAIVIPQVIVSVG) threads the bilayer. Residues 465 to 477 (SGPWDQLFGGGNS) lie on the Extracellular side of the membrane. Residues 478 to 498 (PALAVGAATGFIGGIVAILAL) traverse the membrane as a helical segment. Residues 499 to 510 (PRTRIQKPIPLP) are Cytoplasmic-facing.

This sequence belongs to the glycoside-pentoside-hexuronide (GPH) cation symporter transporter (TC 2.A.2.4) family. As to quaternary structure, homodimer. Interacts with SUC2 and SUC3. As to expression, expressed in sink tissues, mostly in minor veins of sink leaves. Localized in companion cells.

The protein localises to the cell membrane. The catalysed reaction is sucrose(out) + H(+)(out) = sucrose(in) + H(+)(in). Its pathway is glycan biosynthesis; sucrose metabolism. In terms of biological role, responsible for the transport of sucrose into the cell, with the concomitant uptake of protons (symport system). Can also transport maltose at a lesser rate. May also transport biotin. The sequence is that of Sucrose transport protein SUC4 from Arabidopsis thaliana (Mouse-ear cress).